Consider the following 457-residue polypeptide: Senescence-associated protein OSA15, chloroplastic (457 aa).

Residues 1–57 (MATRIPGTVAASGVYYNDQYRMPCKLKGIHCMALNCIPQKAKVRKCMNGYQSTFRFC) constitute a chloroplast transit peptide.

This sequence belongs to the ATA15/OSA15 family. As to expression, expressed in leaves (at protein level).

Its subcellular location is the plastid. It is found in the chloroplast. In terms of biological role, may be involved in the regulation of leaf senescence. This chain is Senescence-associated protein OSA15, chloroplastic, found in Oryza sativa subsp. japonica (Rice).